The sequence spans 100 residues: Aspartyl/glutamyl-tRNA(Asn/Gln) amidotransferase subunit C (100 aa).

The protein belongs to the GatC family. As to quaternary structure, heterotrimer of A, B and C subunits.

It catalyses the reaction L-glutamyl-tRNA(Gln) + L-glutamine + ATP + H2O = L-glutaminyl-tRNA(Gln) + L-glutamate + ADP + phosphate + H(+). The catalysed reaction is L-aspartyl-tRNA(Asn) + L-glutamine + ATP + H2O = L-asparaginyl-tRNA(Asn) + L-glutamate + ADP + phosphate + 2 H(+). Its function is as follows. Allows the formation of correctly charged Asn-tRNA(Asn) or Gln-tRNA(Gln) through the transamidation of misacylated Asp-tRNA(Asn) or Glu-tRNA(Gln) in organisms which lack either or both of asparaginyl-tRNA or glutaminyl-tRNA synthetases. The reaction takes place in the presence of glutamine and ATP through an activated phospho-Asp-tRNA(Asn) or phospho-Glu-tRNA(Gln). The chain is Aspartyl/glutamyl-tRNA(Asn/Gln) amidotransferase subunit C from Streptococcus pyogenes serotype M49 (strain NZ131).